The primary structure comprises 385 residues: Actin-2 (385 aa).

This sequence belongs to the actin family. ARP1 subfamily.

It is found in the cytoplasm. Its subcellular location is the cytoskeleton. This chain is Actin-2, found in Pneumocystis carinii.